Reading from the N-terminus, the 755-residue chain is Transcription factor kayak, isoforms A/B/F (755 aa).

Composition is skewed to low complexity over residues 23–66 (FAQQ…LPTQ) and 149–159 (QQHYPSESQSS). 4 disordered regions span residues 23–75 (FAQQ…SQSV), 149–168 (QQHY…PETP), 316–350 (LGQG…HTDS), and 383–440 (GSAS…KRRV). Over residues 316–333 (LGQGSESEDSNASYNDTQ) the composition is skewed to polar residues. 2 stretches are compositionally biased toward low complexity: residues 341 to 350 (TDTSSAHTDS) and 383 to 397 (GSAS…TSNT). In terms of domain architecture, bZIP spans 418–481 (EQKRAVRRER…NQLEYLLATH (64 aa)). The segment at 420 to 439 (KRAVRRERNKQAAARCRKRR) is basic motif. A leucine-zipper region spans residues 446–453 (LTEEVEQL). Low complexity predominate over residues 510–531 (AGSSGSGASSHHNHNSNDSSNG). Disordered stretches follow at residues 510–552 (AGSS…PLDL) and 716–755 (DGGT…LVSL). Positions 539–549 (TLNSTGRSNSP) are enriched in polar residues. Ser-548 is modified (phosphoserine).

Belongs to the bZIP family. Fos subfamily. In terms of assembly, homodimer. Heterodimer with Jra. The kay-Jra heterodimer binds more stably to the AP-1 site than either of the two proteins alone. Early expression in the embryo is mesodermal and some of this expression is localized to a region surrounding the cephalic furrow. Later in embryonic development expression is ectodermal, corresponding to muscle attachment sites. Also observed in part of the mid- and hindgut and in the anal pad.

It localises to the nucleus. Its function is as follows. Developmentally regulated transcription factor AP-1 binds and recognizes the enhancer DNA sequence: 5'-TGA[CG]TCA-3'. May play a role in the function or determination of a particular subset of cells in the developing embryo. It is able to carry out its function either independently of or in conjunction with Jra. This chain is Transcription factor kayak, isoforms A/B/F (kay), found in Drosophila melanogaster (Fruit fly).